Consider the following 240-residue polypeptide: 4-hydroxy-tetrahydrodipicolinate reductase (240 aa).

NAD(+) contacts are provided by residues 79 to 81 (ATT) and 103 to 106 (SANM). The active-site Proton donor/acceptor is the His-135. (S)-2,3,4,5-tetrahydrodipicolinate is bound at residue His-136. Lys-139 (proton donor) is an active-site residue. 145 to 146 (GT) lines the (S)-2,3,4,5-tetrahydrodipicolinate pocket.

This sequence belongs to the DapB family.

The protein resides in the cytoplasm. The catalysed reaction is (S)-2,3,4,5-tetrahydrodipicolinate + NAD(+) + H2O = (2S,4S)-4-hydroxy-2,3,4,5-tetrahydrodipicolinate + NADH + H(+). The enzyme catalyses (S)-2,3,4,5-tetrahydrodipicolinate + NADP(+) + H2O = (2S,4S)-4-hydroxy-2,3,4,5-tetrahydrodipicolinate + NADPH + H(+). It participates in amino-acid biosynthesis; L-lysine biosynthesis via DAP pathway; (S)-tetrahydrodipicolinate from L-aspartate: step 4/4. Its function is as follows. Catalyzes the conversion of 4-hydroxy-tetrahydrodipicolinate (HTPA) to tetrahydrodipicolinate. The sequence is that of 4-hydroxy-tetrahydrodipicolinate reductase from Staphylococcus aureus (strain Mu3 / ATCC 700698).